A 208-amino-acid chain; its full sequence is Small ribosomal subunit protein uS4B (208 aa).

Residues 95 to 160 enclose the S4 RNA-binding domain; that stretch reads KRLDNVVFRL…NQVYMAAKQA (66 aa).

This sequence belongs to the universal ribosomal protein uS4 family. In terms of assembly, part of the 30S ribosomal subunit. Contacts protein S5. The interaction surface between S4 and S5 is involved in control of translational fidelity.

Its function is as follows. One of the primary rRNA binding proteins, it binds directly to 16S rRNA where it nucleates assembly of the body of the 30S subunit. In terms of biological role, with S5 and S12 plays an important role in translational accuracy. This Bdellovibrio bacteriovorus (strain ATCC 15356 / DSM 50701 / NCIMB 9529 / HD100) protein is Small ribosomal subunit protein uS4B.